Reading from the N-terminus, the 1003-residue chain is UPF0182 protein Mkms_1433 (1003 aa).

The next 7 membrane-spanning stretches (helical) occupy residues 18-38 (VLIG…RFID), 63-83 (VVVF…GLAL), 114-134 (LFGF…AQSY), 176-196 (FVAT…FGGI), 211-231 (IQLV…YWLD), 260-280 (KLIL…AIVL), and 288-308 (IGVV…PLVV). A compositionally biased stretch (low complexity) spans 902–937 (ATGPAPANLPDGQPAAQPPNGQQPAAQTPGNQAGRA). The disordered stretch occupies residues 902 to 979 (ATGPAPANLP…MSGLQDAQRS (78 aa)).

It belongs to the UPF0182 family.

The protein resides in the cell membrane. In Mycobacterium sp. (strain KMS), this protein is UPF0182 protein Mkms_1433.